Reading from the N-terminus, the 367-residue chain is Zorya protein ZorE (367 aa).

In terms of biological role, component of antiviral defense system Zorya type II, composed of ZorA, ZorB and ZorE. Expression of Zorya type II in E.coli (strain MG1655) confers resistance to phages SECphi7 and T7. While most T7 infected Zorya-containing cells undergo abortive infection, a minority produce viable phage progeny. These eventually accumulate to a high multiplicity of infection, leading to culture collapse by 170 minutes after initial infection. ZorA and ZorB probably assemble in the cell inner membrane and exert their effect there. This may be a nuclease. This chain is Zorya protein ZorE, found in Escherichia coli (strain ATCC 8739 / DSM 1576 / NBRC 3972 / NCIMB 8545 / WDCM 00012 / Crooks).